A 437-amino-acid polypeptide reads, in one-letter code: Phosphomethylpyrimidine synthase (437 aa).

Residues N69, M98, Y127, H163, 185-187 (SRG), 226-229 (DALR), and E265 contribute to the substrate site. Zn(2+) is bound at residue H269. Y292 serves as a coordination point for substrate. Zn(2+) is bound at residue H333. C409, C412, and C416 together coordinate [4Fe-4S] cluster.

This sequence belongs to the ThiC family. It depends on [4Fe-4S] cluster as a cofactor.

The catalysed reaction is 5-amino-1-(5-phospho-beta-D-ribosyl)imidazole + S-adenosyl-L-methionine = 4-amino-2-methyl-5-(phosphooxymethyl)pyrimidine + CO + 5'-deoxyadenosine + formate + L-methionine + 3 H(+). The protein operates within cofactor biosynthesis; thiamine diphosphate biosynthesis. Its function is as follows. Catalyzes the synthesis of the hydroxymethylpyrimidine phosphate (HMP-P) moiety of thiamine from aminoimidazole ribotide (AIR) in a radical S-adenosyl-L-methionine (SAM)-dependent reaction. In Alkaliphilus oremlandii (strain OhILAs) (Clostridium oremlandii (strain OhILAs)), this protein is Phosphomethylpyrimidine synthase.